Here is a 138-residue protein sequence, read N- to C-terminus: Holo-[acyl-carrier-protein] synthase (138 aa).

2 residues coordinate Mg(2+): D11 and E65.

The protein belongs to the P-Pant transferase superfamily. AcpS family. It depends on Mg(2+) as a cofactor.

Its subcellular location is the cytoplasm. The catalysed reaction is apo-[ACP] + CoA = holo-[ACP] + adenosine 3',5'-bisphosphate + H(+). In terms of biological role, transfers the 4'-phosphopantetheine moiety from coenzyme A to a Ser of acyl-carrier-protein. This Ralstonia nicotianae (strain ATCC BAA-1114 / GMI1000) (Ralstonia solanacearum) protein is Holo-[acyl-carrier-protein] synthase.